The primary structure comprises 217 residues: MPSCPPAYSEQVRGDGDGWVVSDSGVAYWGRYGAAGLLLRAPRPDGTPAVLLQHRALWSHQGGTWGLPGGARDSHETPEQTAVRESSEEAGLSAERLEVRATVVTAEVCGVDDTHWTYTTVVADAGELLDTVPNRESAELRWVAENEVADLPLHPGFAASWQRLRTAPATVPLARCDERRQRLPRTIQIEAGVFLWCTPGDADQAPSPLGRRISSLL.

Residues 30–164 form the Nudix hydrolase domain; the sequence is GRYGAAGLLL…PGFAASWQRL (135 aa). The disordered stretch occupies residues 67–92; that stretch reads LPGGARDSHETPEQTAVRESSEEAGL. G70, E85, E88, and E89 together coordinate Mg(2+). The Nudix box motif lies at 70-91; sequence GARDSHETPEQTAVRESSEEAG.

It belongs to the Nudix hydrolase family. It depends on Mg(2+) as a cofactor. Mn(2+) serves as cofactor.

The catalysed reaction is 8-oxo-dGTP + H2O = 8-oxo-dGMP + diphosphate + H(+). Functionally, may be involved in the GO system responsible for removing an oxidatively damaged form of guanine (7,8-dihydro-8-oxoguanine, 8-oxo-dGTP) from DNA and the nucleotide pool. 8-oxo-dGTP is inserted opposite dA and dC residues of template DNA with almost equal efficiency thus leading to A.T to G.C transversions. MutT specifically degrades 8-oxo-dGTP to the monophosphate. The polypeptide is Putative 8-oxo-dGTP diphosphatase 3 (mutT3) (Mycobacterium tuberculosis (strain CDC 1551 / Oshkosh)).